Consider the following 268-residue polypeptide: Tryptophan synthase alpha chain (268 aa).

Catalysis depends on proton acceptor residues E47 and D58.

It belongs to the TrpA family. As to quaternary structure, tetramer of two alpha and two beta chains.

The enzyme catalyses (1S,2R)-1-C-(indol-3-yl)glycerol 3-phosphate + L-serine = D-glyceraldehyde 3-phosphate + L-tryptophan + H2O. It functions in the pathway amino-acid biosynthesis; L-tryptophan biosynthesis; L-tryptophan from chorismate: step 5/5. Its function is as follows. The alpha subunit is responsible for the aldol cleavage of indoleglycerol phosphate to indole and glyceraldehyde 3-phosphate. The chain is Tryptophan synthase alpha chain from Chlorobium phaeobacteroides (strain BS1).